The chain runs to 87 residues: NADH dehydrogenase [ubiquinone] 1 alpha subcomplex subunit 4-like 2 (87 aa).

Belongs to the complex I NDUFA4 subunit family.

The polypeptide is NADH dehydrogenase [ubiquinone] 1 alpha subcomplex subunit 4-like 2 (NDUFA4L2) (Homo sapiens (Human)).